The primary structure comprises 329 residues: Flotillin-like protein FloA (329 aa).

2 helical membrane passes run 4-24 and 26-46; these read IGFI…FSFV and VGLW…TLVG.

This sequence belongs to the flotillin-like FloA family. As to quaternary structure, homooligomerizes.

It localises to the cell membrane. It is found in the membrane raft. In terms of biological role, found in functional membrane microdomains (FMM) that may be equivalent to eukaryotic membrane rafts. FMMs are highly dynamic and increase in number as cells age. Flotillins are thought to be important factors in membrane fluidity. The protein is Flotillin-like protein FloA of Staphylococcus epidermidis (strain ATCC 35984 / DSM 28319 / BCRC 17069 / CCUG 31568 / BM 3577 / RP62A).